An 85-amino-acid polypeptide reads, in one-letter code: Large ribosomal subunit protein bL27 (85 aa).

Positions 1 to 21 (MAHKKAGGSTRNGRDSESKRL) are disordered.

This sequence belongs to the bacterial ribosomal protein bL27 family.

This is Large ribosomal subunit protein bL27 from Pseudomonas entomophila (strain L48).